A 234-amino-acid chain; its full sequence is tRNA (guanine-N(1)-)-methyltransferase (234 aa).

S-adenosyl-L-methionine-binding positions include Gly-112 and 132–137 (IGDFIL).

The protein belongs to the RNA methyltransferase TrmD family. Homodimer.

Its subcellular location is the cytoplasm. The catalysed reaction is guanosine(37) in tRNA + S-adenosyl-L-methionine = N(1)-methylguanosine(37) in tRNA + S-adenosyl-L-homocysteine + H(+). Functionally, specifically methylates guanosine-37 in various tRNAs. This chain is tRNA (guanine-N(1)-)-methyltransferase, found in Campylobacter jejuni subsp. doylei (strain ATCC BAA-1458 / RM4099 / 269.97).